The primary structure comprises 292 residues: MNFQSVIATLNQFWADRGCLIAQPYDTEKGAGTMNPHTFLRAIGPEPWAVAYVEPCRRPTDGRYGENPNRYQHYYQYQVLIKPSPEGIQETYLDSLRALGIQPEEHDIRFVEDNWESPTLGAWGVGWEVWLDGMEVTQFTYFQQCGGIDCRPVSIEITYGLERLAMYLQNVEAFTEIKWTDRLSYGDVHLQSEIEQCTYNFEASTPELLFQLFGLYEQEATQLIEKGLVHPSLDYVLKCSHSFNLLDARGLISVTERTRYIGRIRNMARQVAKLYLEQREQLGFPLLQKVTA.

Belongs to the class-II aminoacyl-tRNA synthetase family. Tetramer of two alpha and two beta subunits.

It localises to the cytoplasm. It carries out the reaction tRNA(Gly) + glycine + ATP = glycyl-tRNA(Gly) + AMP + diphosphate. This chain is Glycine--tRNA ligase alpha subunit, found in Synechococcus elongatus (strain ATCC 33912 / PCC 7942 / FACHB-805) (Anacystis nidulans R2).